A 437-amino-acid polypeptide reads, in one-letter code: Proline--tRNA ligase (437 aa).

It belongs to the class-II aminoacyl-tRNA synthetase family. ProS type 2 subfamily. Homodimer.

It is found in the cytoplasm. The catalysed reaction is tRNA(Pro) + L-proline + ATP = L-prolyl-tRNA(Pro) + AMP + diphosphate. In terms of biological role, catalyzes the attachment of proline to tRNA(Pro) in a two-step reaction: proline is first activated by ATP to form Pro-AMP and then transferred to the acceptor end of tRNA(Pro). The polypeptide is Proline--tRNA ligase (Rhizorhabdus wittichii (strain DSM 6014 / CCUG 31198 / JCM 15750 / NBRC 105917 / EY 4224 / RW1) (Sphingomonas wittichii)).